The sequence spans 105 residues: Heat shock protein HspQ (105 aa).

It belongs to the HspQ family.

The protein resides in the cytoplasm. In terms of biological role, involved in the degradation of certain denaturated proteins, including DnaA, during heat shock stress. This chain is Heat shock protein HspQ, found in Blochmanniella pennsylvanica (strain BPEN).